The following is a 391-amino-acid chain: Alkanesulfonate monooxygenase (391 aa).

This sequence belongs to the SsuD family.

It catalyses the reaction an alkanesulfonate + FMNH2 + O2 = an aldehyde + FMN + sulfite + H2O + 2 H(+). In terms of biological role, catalyzes the desulfonation of aliphatic sulfonates. This Rhodopseudomonas palustris (strain TIE-1) protein is Alkanesulfonate monooxygenase.